Here is a 197-residue protein sequence, read N- to C-terminus: Large ribosomal subunit protein uL10 (197 aa).

A disordered region spans residues 162 to 197 (GGASAPAAEEAPAAEEAAAEEVAAPAEAAEAATEEN). Low complexity predominate over residues 163–197 (GASAPAAEEAPAAEEAAAEEVAAPAEAAEAATEEN).

The protein belongs to the universal ribosomal protein uL10 family. In terms of assembly, part of the ribosomal stalk of the 50S ribosomal subunit. The N-terminus interacts with L11 and the large rRNA to form the base of the stalk. The C-terminus forms an elongated spine to which L12 dimers bind in a sequential fashion forming a multimeric L10(L12)X complex.

Its function is as follows. Forms part of the ribosomal stalk, playing a central role in the interaction of the ribosome with GTP-bound translation factors. The polypeptide is Large ribosomal subunit protein uL10 (Paenarthrobacter aurescens (strain TC1)).